The following is a 494-amino-acid chain: Probable malate:quinone oxidoreductase (494 aa).

Belongs to the MQO family. Requires FAD as cofactor.

It carries out the reaction (S)-malate + a quinone = a quinol + oxaloacetate. The protein operates within carbohydrate metabolism; tricarboxylic acid cycle; oxaloacetate from (S)-malate (quinone route): step 1/1. This Helicobacter hepaticus (strain ATCC 51449 / 3B1) protein is Probable malate:quinone oxidoreductase.